The sequence spans 323 residues: Tumor-associated calcium signal transducer 2 (323 aa).

The first 26 residues, 1–26 (MARGPGLAPPPLRLPLLLLVLAAVTG), serve as a signal peptide directing secretion. The Extracellular segment spans residues 27–274 (HTAAQDNCTC…PPKFSMKRLT (248 aa)). N-linked (GlcNAc...) asparagine glycosylation occurs at asparagine 33. A Thyroglobulin type-1 domain is found at 70–145 (TSKCLLLKAR…TDKGDLSLRC (76 aa)). 3 disulfide bridges follow: cysteine 73–cysteine 108, cysteine 119–cysteine 125, and cysteine 127–cysteine 145. N-linked (GlcNAc...) asparagine glycosylation is present at asparagine 120. Asparagine 168 and asparagine 208 each carry an N-linked (GlcNAc...) asparagine glycan. Residues 275-297 (AGLIAVIVVVVVALVAGMAVLVI) form a helical membrane-spanning segment. Residues 298 to 323 (TNRRKSGKYKKVEIKELGELRKEPSL) lie on the Cytoplasmic side of the membrane.

The protein belongs to the EPCAM family. The N-terminus is blocked. In terms of tissue distribution, placenta, pancreatic carcinoma cell lines.

It is found in the membrane. Its function is as follows. May function as a growth factor receptor. This is Tumor-associated calcium signal transducer 2 (TACSTD2) from Homo sapiens (Human).